Reading from the N-terminus, the 126-residue chain is Arginine decarboxylase proenzyme (126 aa).

The active-site Schiff-base intermediate with substrate; via pyruvic acid is the S74. S74 carries the post-translational modification Pyruvic acid (Ser); by autocatalysis. Residue H79 is the Proton acceptor; for processing activity of the active site. C94 acts as the Proton donor; for catalytic activity in catalysis.

This sequence belongs to the prokaryotic AdoMetDC family. Type 1 subfamily. Heterooctamer of four alpha and four beta chains arranged as a tetramer of alpha/beta heterodimers. Pyruvate serves as cofactor. In terms of processing, is synthesized initially as an inactive proenzyme. Formation of the active enzyme involves a self-maturation process in which the active site pyruvoyl group is generated from an internal serine residue via an autocatalytic post-translational modification. Two non-identical subunits are generated from the proenzyme in this reaction, and the pyruvate is formed at the N-terminus of the alpha chain, which is derived from the carboxyl end of the proenzyme. The post-translation cleavage follows an unusual pathway, termed non-hydrolytic serinolysis, in which the side chain hydroxyl group of the serine supplies its oxygen atom to form the C-terminus of the beta chain, while the remainder of the serine residue undergoes an oxidative deamination to produce ammonia and the pyruvoyl group blocking the N-terminus of the alpha chain.

The enzyme catalyses L-arginine + H(+) = agmatine + CO2. It participates in amine and polyamine biosynthesis; agmatine biosynthesis; agmatine from L-arginine: step 1/1. Specifically catalyzes the decarboxylation of L-arginine to agmatine. Has no S-adenosylmethionine decarboxylase (AdoMetDC) activity. The sequence is that of Arginine decarboxylase proenzyme from Pyrobaculum calidifontis (strain DSM 21063 / JCM 11548 / VA1).